The following is a 151-amino-acid chain: 1,4-dihydroxy-2-naphthoyl-CoA hydrolase (151 aa).

Residue aspartate 19 is part of the active site.

It belongs to the 4-hydroxybenzoyl-CoA thioesterase family. DHNA-CoA hydrolase subfamily.

It carries out the reaction 1,4-dihydroxy-2-naphthoyl-CoA + H2O = 1,4-dihydroxy-2-naphthoate + CoA + H(+). The protein operates within cofactor biosynthesis; phylloquinone biosynthesis. Its pathway is quinol/quinone metabolism; 1,4-dihydroxy-2-naphthoate biosynthesis; 1,4-dihydroxy-2-naphthoate from chorismate: step 7/7. In terms of biological role, catalyzes the hydrolysis of 1,4-dihydroxy-2-naphthoyl-CoA (DHNA-CoA) to 1,4-dihydroxy-2-naphthoate (DHNA), a reaction involved in phylloquinone (vitamin K1) biosynthesis. In Prochlorococcus marinus (strain MIT 9303), this protein is 1,4-dihydroxy-2-naphthoyl-CoA hydrolase.